The primary structure comprises 303 residues: tRNA dimethylallyltransferase (303 aa).

9-16 (GPTAVGKT) lines the ATP pocket. 11-16 (TAVGKT) contacts substrate. The interaction with substrate tRNA stretch occupies residues 34-37 (DSRQ).

This sequence belongs to the IPP transferase family. In terms of assembly, monomer. Mg(2+) serves as cofactor.

The enzyme catalyses adenosine(37) in tRNA + dimethylallyl diphosphate = N(6)-dimethylallyladenosine(37) in tRNA + diphosphate. Its function is as follows. Catalyzes the transfer of a dimethylallyl group onto the adenine at position 37 in tRNAs that read codons beginning with uridine, leading to the formation of N6-(dimethylallyl)adenosine (i(6)A). The chain is tRNA dimethylallyltransferase from Petrotoga mobilis (strain DSM 10674 / SJ95).